The following is a 208-amino-acid chain: ATP-dependent Clp protease proteolytic subunit (208 aa).

The Nucleophile role is filled by serine 101. Residue histidine 126 is part of the active site.

It belongs to the peptidase S14 family. In terms of assembly, component of the chloroplastic Clp protease core complex.

It localises to the plastid. Its subcellular location is the chloroplast stroma. It catalyses the reaction Hydrolysis of proteins to small peptides in the presence of ATP and magnesium. alpha-casein is the usual test substrate. In the absence of ATP, only oligopeptides shorter than five residues are hydrolyzed (such as succinyl-Leu-Tyr-|-NHMec, and Leu-Tyr-Leu-|-Tyr-Trp, in which cleavage of the -Tyr-|-Leu- and -Tyr-|-Trp bonds also occurs).. Cleaves peptides in various proteins in a process that requires ATP hydrolysis. Has a chymotrypsin-like activity. Plays a major role in the degradation of misfolded proteins. The protein is ATP-dependent Clp protease proteolytic subunit of Nephroselmis olivacea (Green alga).